The following is an 837-amino-acid chain: A disintegrin and metalloproteinase with thrombospondin motifs 4 (837 aa).

Residues 1 to 51 (MSQTGSHPGRGLAGRWLWGAQPCLLLPIVPLSWLVWLLLLLLASLLPSARL) form the signal peptide. A propeptide spanning residues 52–212 (ASPLPREEEI…PSPRPRRAKR (161 aa)) is cleaved from the precursor. N-linked (GlcNAc...) asparagine glycosylation occurs at Asn-68. Positions 192–199 (PMCNVKAP) match the Cysteine switch motif. A Zn(2+)-binding site is contributed by Cys-194. Residues 218-428 (RFVETLVVAD…GYGHCLLDKP (211 aa)) enclose the Peptidase M12B domain. 11 cysteine pairs are disulfide-bonded: Cys-293–Cys-345, Cys-322–Cys-327, Cys-339–Cys-423, Cys-377–Cys-407, Cys-449–Cys-472, Cys-460–Cys-482, Cys-467–Cys-501, Cys-495–Cys-506, Cys-532–Cys-569, Cys-536–Cys-574, and Cys-547–Cys-559. Residue His-361 coordinates Zn(2+). Glu-362 is an active-site residue. Zn(2+) is bound by residues His-365 and His-371. The Disintegrin domain maps to 437 to 519 (TFPGKDYDAD…DQLQDFNIPQ (83 aa)). Residues 520-575 (AGGWGPWGPWGDCSRTCGGGVQFSSRDCTRPVPRNGGKYCEGRRTRFRSCNTEDCP) form the TSP type-1 domain. The segment at 686 to 837 (SKQSGSFRKF…LRRRPWAGRK (152 aa)) is spacer.

Interacts with SRPX2. Requires Zn(2+) as cofactor. The precursor is cleaved by a furin endopeptidase. Post-translationally, glycosylated. Can be O-fucosylated by POFUT2 on a serine or a threonine residue found within the consensus sequence C1-X(2)-(S/T)-C2-G of the TSP type-1 repeat domains where C1 and C2 are the first and second cysteine residue of the repeat, respectively. Fucosylated repeats can then be further glycosylated by the addition of a beta-1,3-glucose residue by the glucosyltransferase, B3GALTL. Fucosylation mediates the efficient secretion of ADAMTS family members. Can also be C-glycosylated with one or two mannose molecules on tryptophan residues within the consensus sequence W-X-X-W of the TPRs, and N-glycosylated. These other glycosylations can also facilitate secretion. As to expression, expressed in brain, lung and heart. Expressed at very low level in placenta and skeletal muscles. Isoform 2: Detected in osteoarthritic synovium.

It localises to the secreted. The protein localises to the extracellular space. Its subcellular location is the extracellular matrix. The enzyme catalyses Glutamyl endopeptidase. Bonds cleaved include 370-Thr-Glu-Gly-Glu-|-Ala-Arg-Gly-Ser-377 in the interglobular domain of mammalian aggrecan.. In terms of biological role, cleaves aggrecan, a cartilage proteoglycan, at the '392-Glu-|-Ala-393' site and may be involved in its turnover. Also cleaves COMP. May play an important role in the destruction of aggrecan in arthritic diseases. Could be a critical factor in the exacerbation of neurodegeneration in Alzheimer disease. The protein is A disintegrin and metalloproteinase with thrombospondin motifs 4 (ADAMTS4) of Homo sapiens (Human).